Consider the following 559-residue polypeptide: Asparagine--tRNA ligase, cytoplasmic (559 aa).

Phosphoserine is present on Ser-72. Residues 82–102 (HREQMKNDSREKKEAEDNLRR) are disordered. Lys-255 carries the post-translational modification N6-acetyllysine. Position 493 is a phosphoserine (Ser-493). At Lys-501 the chain carries N6-acetyllysine.

The protein belongs to the class-II aminoacyl-tRNA synthetase family. In terms of assembly, homodimer.

It is found in the cytoplasm. It catalyses the reaction tRNA(Asn) + L-asparagine + ATP = L-asparaginyl-tRNA(Asn) + AMP + diphosphate + H(+). Catalyzes the attachment of asparagine to tRNA(Asn) in a two-step reaction: asparagine is first activated by ATP to form Asn-AMP and then transferred to the acceptor end of tRNA(Asn). In addition to its essential role in protein synthesis, acts as a signaling molecule that induced migration of CCR3-expressing cells. Has an essential role in the development of the cerebral cortex, being required for proper proliferation of radial glial cells. The protein is Asparagine--tRNA ligase, cytoplasmic of Mus musculus (Mouse).